The primary structure comprises 871 residues: Metabotropic glutamate receptor 6 (871 aa).

The signal sequence occupies residues 1–23 (MGRLRVLLLWLAWWLSQAGIAHG). Residues 24–579 (AGSVRLAGGL…VVRLTWSSPW (556 aa)) lie on the Extracellular side of the membrane. A disulfide bridge connects residues Cys51 and Cys93. L-glutamate-binding positions include Ser148, 169–171 (AST), and Tyr219. 7 cysteine pairs are disulfide-bonded: Cys238–Cys530, Cys361–Cys377, Cys417–Cys424, Cys512–Cys531, Cys516–Cys534, Cys537–Cys549, and Cys552–Cys565. Asn290 carries an N-linked (GlcNAc...) asparagine glycan. An L-glutamate-binding site is contributed by Asp301. Lys394 lines the L-glutamate pocket. N-linked (GlcNAc...) asparagine glycans are attached at residues Asn445 and Asn473. Residue Asn561 is glycosylated (N-linked (GlcNAc...) asparagine). A helical transmembrane segment spans residues 580–602 (AALPLLLAVLGIMATTTIIATFM). The Cytoplasmic portion of the chain corresponds to 603 to 616 (RHNDTPIVRASGRE). Residues 617-637 (LSYVLLTGIFLIYAITFLMVA) form a helical membrane-spanning segment. Topologically, residues 638-648 (EPCAAVCASRR) are extracellular. A helical membrane pass occupies residues 649–667 (LLLGLGTTLSYSALLTKTN). The Cytoplasmic segment spans residues 668–691 (RIYRIFEQGKRSVTPPPFISPTSQ). Residues 692–712 (LVITFGLTSLQVVGVIAWLGA) traverse the membrane as a helical segment. Residues 713–742 (QPPHSVIDYEEQRTVDPEQARGVLKCDMSD) lie on the Extracellular side of the membrane. Residues 743–764 (LSLIGCLGYSLLLMVTCTVYAI) traverse the membrane as a helical segment. The Cytoplasmic segment spans residues 765-777 (KARGVPETFNEAK). The helical transmembrane segment at 778-800 (PIGFTMYTTCIIWLAFVPIFFGT) threads the bilayer. Residues 801 to 813 (AQSAEKIYIQTTT) are Extracellular-facing. The helical transmembrane segment at 814–839 (LTVSLSLSASVSLGMLYVPKTYVILF) threads the bilayer. Over 840 to 871 (HPEQNVQKRKRSLKKTSTMAAPPKSENSEDAK) the chain is Cytoplasmic. Residues 848–871 (RKRSLKKTSTMAAPPKSENSEDAK) form a disordered region.

Belongs to the G-protein coupled receptor 3 family. Homodimer. Interacts with GPR179. Interacts with photoreceptor synaptic protein LRIT1 (via its N-terminal extracellular domain). As to expression, detected in the outer plexiform layer in retina (at protein level).

Its subcellular location is the cell membrane. The protein resides in the endoplasmic reticulum membrane. It localises to the golgi apparatus membrane. It is found in the cell projection. The protein localises to the dendrite. G-protein coupled receptor for glutamate. Ligand binding causes a conformation change that triggers signaling via guanine nucleotide-binding proteins (G proteins) and modulates the activity of down-stream effectors, such as adenylate cyclase. Signaling inhibits adenylate cyclase activity. Signaling stimulates TRPM1 channel activity and Ca(2+) uptake. Required for normal vision. This is Metabotropic glutamate receptor 6 (Grm6) from Mus musculus (Mouse).